The chain runs to 435 residues: 3-phosphoshikimate 1-carboxyvinyltransferase (435 aa).

The 3-phosphoshikimate site is built by Lys21, Ser22, and Arg26. Lys21 contacts phosphoenolpyruvate. Phosphoenolpyruvate-binding residues include Gly100 and Arg128. The 3-phosphoshikimate site is built by Ser171, Ser172, Gln173, Ser199, Asp313, and Lys340. Phosphoenolpyruvate is bound at residue Gln173. Catalysis depends on Asp313, which acts as the Proton acceptor. 3 residues coordinate phosphoenolpyruvate: Arg344, Arg386, and Lys412.

This sequence belongs to the EPSP synthase family. As to quaternary structure, monomer.

It is found in the cytoplasm. It catalyses the reaction 3-phosphoshikimate + phosphoenolpyruvate = 5-O-(1-carboxyvinyl)-3-phosphoshikimate + phosphate. It participates in metabolic intermediate biosynthesis; chorismate biosynthesis; chorismate from D-erythrose 4-phosphate and phosphoenolpyruvate: step 6/7. Its function is as follows. Catalyzes the transfer of the enolpyruvyl moiety of phosphoenolpyruvate (PEP) to the 5-hydroxyl of shikimate-3-phosphate (S3P) to produce enolpyruvyl shikimate-3-phosphate and inorganic phosphate. This is 3-phosphoshikimate 1-carboxyvinyltransferase from Clostridium novyi (strain NT).